The primary structure comprises 115 residues: T cell receptor beta variable 11-3 (115 aa).

Residues M1–A21 form the signal peptide. Positions G22–L115 constitute an Ig-like domain. C42 and C111 are disulfide-bonded.

As to quaternary structure, alpha-beta TR is a heterodimer composed of an alpha and beta chain; disulfide-linked. The alpha-beta TR is associated with the transmembrane signaling CD3 coreceptor proteins to form the TR-CD3 (TcR or TCR). The assembly of alpha-beta TR heterodimers with CD3 occurs in the endoplasmic reticulum where a single alpha-beta TR heterodimer associates with one CD3D-CD3E heterodimer, one CD3G-CD3E heterodimer and one CD247 homodimer forming a stable octameric structure. CD3D-CD3E and CD3G-CD3E heterodimers preferentially associate with TR alpha and TR beta chains, respectively. The association of the CD247 homodimer is the last step of TcR assembly in the endoplasmic reticulum and is required for transport to the cell surface.

It is found in the cell membrane. Functionally, v region of the variable domain of T cell receptor (TR) beta chain that participates in the antigen recognition. Alpha-beta T cell receptors are antigen specific receptors which are essential to the immune response and are present on the cell surface of T lymphocytes. Recognize peptide-major histocompatibility (MH) (pMH) complexes that are displayed by antigen presenting cells (APC), a prerequisite for efficient T cell adaptive immunity against pathogens. Binding of alpha-beta TR to pMH complex initiates TR-CD3 clustering on the cell surface and intracellular activation of LCK that phosphorylates the ITAM motifs of CD3G, CD3D, CD3E and CD247 enabling the recruitment of ZAP70. In turn ZAP70 phosphorylates LAT, which recruits numerous signaling molecules to form the LAT signalosome. The LAT signalosome propagates signal branching to three major signaling pathways, the calcium, the mitogen-activated protein kinase (MAPK) kinase and the nuclear factor NF-kappa-B (NF-kB) pathways, leading to the mobilization of transcription factors that are critical for gene expression and essential for T cell growth and differentiation. The T cell repertoire is generated in the thymus, by V-(D)-J rearrangement. This repertoire is then shaped by intrathymic selection events to generate a peripheral T cell pool of self-MH restricted, non-autoaggressive T cells. Post-thymic interaction of alpha-beta TR with the pMH complexes shapes TR structural and functional avidity. This is T cell receptor beta variable 11-3 from Homo sapiens (Human).